The following is a 121-amino-acid chain: Ribosome-binding factor A (121 aa).

The protein belongs to the RbfA family. Monomer. Binds 30S ribosomal subunits, but not 50S ribosomal subunits or 70S ribosomes.

It is found in the cytoplasm. Functionally, one of several proteins that assist in the late maturation steps of the functional core of the 30S ribosomal subunit. Associates with free 30S ribosomal subunits (but not with 30S subunits that are part of 70S ribosomes or polysomes). Required for efficient processing of 16S rRNA. May interact with the 5'-terminal helix region of 16S rRNA. The sequence is that of Ribosome-binding factor A from Hydrogenovibrio crunogenus (strain DSM 25203 / XCL-2) (Thiomicrospira crunogena).